Reading from the N-terminus, the 1395-residue chain is DNA-directed RNA polymerase subunit beta' (1395 aa).

Residues cysteine 70, cysteine 72, cysteine 85, and cysteine 88 each coordinate Zn(2+). Residues aspartate 460, aspartate 462, and aspartate 464 each coordinate Mg(2+). Positions 814, 888, 895, and 898 each coordinate Zn(2+).

This sequence belongs to the RNA polymerase beta' chain family. The RNAP catalytic core consists of 2 alpha, 1 beta, 1 beta' and 1 omega subunit. When a sigma factor is associated with the core the holoenzyme is formed, which can initiate transcription. Mg(2+) is required as a cofactor. It depends on Zn(2+) as a cofactor.

The enzyme catalyses RNA(n) + a ribonucleoside 5'-triphosphate = RNA(n+1) + diphosphate. Its function is as follows. DNA-dependent RNA polymerase catalyzes the transcription of DNA into RNA using the four ribonucleoside triphosphates as substrates. This Pseudoalteromonas atlantica (strain T6c / ATCC BAA-1087) protein is DNA-directed RNA polymerase subunit beta'.